The following is a 277-amino-acid chain: Large ribosomal subunit protein uL2 (277 aa).

The interval 219 to 277 is disordered; it reads TVRGSVMNPNDHPHGGGEGKAPVGRKAPSTPWGKPALGLKTRNKKAKSNKLIVRRRNEK. Over residues 259-277 the composition is skewed to basic residues; sequence TRNKKAKSNKLIVRRRNEK.

This sequence belongs to the universal ribosomal protein uL2 family. As to quaternary structure, part of the 50S ribosomal subunit. Forms a bridge to the 30S subunit in the 70S ribosome.

Its function is as follows. One of the primary rRNA binding proteins. Required for association of the 30S and 50S subunits to form the 70S ribosome, for tRNA binding and peptide bond formation. It has been suggested to have peptidyltransferase activity; this is somewhat controversial. Makes several contacts with the 16S rRNA in the 70S ribosome. In Streptococcus equi subsp. zooepidemicus (strain MGCS10565), this protein is Large ribosomal subunit protein uL2.